A 373-amino-acid polypeptide reads, in one-letter code: tRNA-specific 2-thiouridylase MnmA (373 aa).

ATP-binding positions include 18-25 and L44; that span reads AMSGGVDS. The active-site Nucleophile is C117. A disulfide bridge links C117 with C214. G141 serves as a coordination point for ATP. Residues 163–165 are interaction with tRNA; it reads RDQ. C214 functions as the Cysteine persulfide intermediate in the catalytic mechanism.

Belongs to the MnmA/TRMU family.

The protein resides in the cytoplasm. The catalysed reaction is S-sulfanyl-L-cysteinyl-[protein] + uridine(34) in tRNA + AH2 + ATP = 2-thiouridine(34) in tRNA + L-cysteinyl-[protein] + A + AMP + diphosphate + H(+). In terms of biological role, catalyzes the 2-thiolation of uridine at the wobble position (U34) of tRNA, leading to the formation of s(2)U34. The protein is tRNA-specific 2-thiouridylase MnmA of Paramagnetospirillum magneticum (strain ATCC 700264 / AMB-1) (Magnetospirillum magneticum).